A 156-amino-acid polypeptide reads, in one-letter code: Rhombotin-1 (156 aa).

LIM zinc-binding domains follow at residues 22–84 (KGCA…LFGT) and 86–148 (GNCA…GQLN).

As to expression, expressed in the brain and not in the thymus.

Its subcellular location is the nucleus. In terms of biological role, may be involved in gene regulation within neural lineage cells potentially by direct DNA binding or by binding to other transcription factors. This chain is Rhombotin-1 (LMO1), found in Bos taurus (Bovine).